The sequence spans 101 residues: Secreted RxLR effector protein 64 (101 aa).

The signal sequence occupies residues M1–G23. Positions R48–R51 match the RxLR motif. The helical transmembrane segment at L67 to F87 threads the bilayer.

It belongs to the RxLR effector family.

It localises to the secreted. Its subcellular location is the host cytoplasm. It is found in the host nucleus. The protein resides in the membrane. Functionally, effector that acts as a broad suppressor of cell death to interrupt plant immunity. Inhibits cell death induced by cell death-inducing proteins, including the PAMP elicitor INF1 from P.infestans. The protein is Secreted RxLR effector protein 64 of Plasmopara viticola (Downy mildew of grapevine).